The sequence spans 608 residues: MKLTYYYYAFCIIKVIASLRLDSYKKQNVFFLKAFFKNVINIKKERKKNLVNSFFYVGRRNKIPIKYSNNEFYNIHNENYDNTKYYNNNNNTNDYDKKDNNVGKRKYSRKNMLYMNSSEKDNFLNENILKKKSSEKEIEQSLTPLNMDWVKVMNLIYSSNDIDATTLAFNAAMSAVEKKGCLSTMLDLIGTMKSKNIKPDLVSYKLVLSLCDKYHLVDTAEILFEEMIESDKINPNYEIYAIMISCYAKTGNGYKAIELFEKLRNDPFVEEMRSLNITNTNDNKENSNDLQTSIIHNNMEDNNNNNNNNDNNIYDDKFKHISNKIKNVENCSGKIQYSEYANVIYACNISNLYEQGIKYFEELLKSGKYMPSIFVFENIFDLLSKNGDYEKSLEYYNNLKNDPNFKKNINVNILNNLLKALSIHNKINVAEDIWNNEFDELLLTPNNLSYQILLKIYSHIDNYEKAFKLFKEMQVNKLLNNKNILPFIYTIESTKNCGIYNYAIYVLRVAKLLNFKANDLLMLYNNTMISCINSKKYDVIISLYAELINMQQKDTSFQININTLTFVLLAFKELNMKQDFINLKNIIIQRNYKLPPLCSKIFSETENY.

7 PPR repeats span residues threonine 165–proline 199, aspartate 200–serine 230, asparagine 236–glutamate 270, glutamine 336–methionine 370, serine 372–aspartate 402, asparagine 410–proline 445, and asparagine 446–asparagine 480.

The protein belongs to the PPR family. P subfamily. In terms of assembly, homodimer.

Its subcellular location is the plastid. The protein resides in the apicoplast. Binds to apicoplast RNA transcripts, preferentially to the motif UUAU, and protects RNA transcripts from degradation by ribonuclease. In Plasmodium falciparum (isolate 3D7), this protein is Pentatricopeptide repeat-containing protein 1, apicoplast.